Here is a 956-residue protein sequence, read N- to C-terminus: UvrABC system protein A (956 aa).

33–40 (GLSGSGKS) serves as a coordination point for ATP. Residues 252 to 279 (CPYCGFSVGELEPRMFSFNSPFGACPTC) form a C4-type zinc finger. ABC transporter domains are found at residues 309 to 587 (WRPI…KNSI) and 607 to 936 (GNGL…KYLK). 639 to 646 (GVSGSGKS) lines the ATP pocket. The C4-type zinc finger occupies 738–764 (CEACKGDGIIKIEMHFLPDVYVPCEVC).

This sequence belongs to the ABC transporter superfamily. UvrA family. In terms of assembly, forms a heterotetramer with UvrB during the search for lesions.

Its subcellular location is the cytoplasm. The UvrABC repair system catalyzes the recognition and processing of DNA lesions. UvrA is an ATPase and a DNA-binding protein. A damage recognition complex composed of 2 UvrA and 2 UvrB subunits scans DNA for abnormalities. When the presence of a lesion has been verified by UvrB, the UvrA molecules dissociate. This Listeria innocua serovar 6a (strain ATCC BAA-680 / CLIP 11262) protein is UvrABC system protein A.